Reading from the N-terminus, the 400-residue chain is Imidazolonepropionase (400 aa).

The Fe(3+) site is built by H70 and H72. Residues H70 and H72 each contribute to the Zn(2+) site. Residues R79, Y142, and H175 each coordinate 4-imidazolone-5-propanoate. Y142 serves as a coordination point for N-formimidoyl-L-glutamate. H239 serves as a coordination point for Fe(3+). H239 serves as a coordination point for Zn(2+). Position 242 (Q242) interacts with 4-imidazolone-5-propanoate. Residue D314 coordinates Fe(3+). D314 provides a ligand contact to Zn(2+). Positions 316 and 318 each coordinate N-formimidoyl-L-glutamate. Position 319 (T319) interacts with 4-imidazolone-5-propanoate.

Belongs to the metallo-dependent hydrolases superfamily. HutI family. Zn(2+) serves as cofactor. Requires Fe(3+) as cofactor.

It localises to the cytoplasm. It catalyses the reaction 4-imidazolone-5-propanoate + H2O = N-formimidoyl-L-glutamate. The protein operates within amino-acid degradation; L-histidine degradation into L-glutamate; N-formimidoyl-L-glutamate from L-histidine: step 3/3. Its function is as follows. Catalyzes the hydrolytic cleavage of the carbon-nitrogen bond in imidazolone-5-propanoate to yield N-formimidoyl-L-glutamate. It is the third step in the universal histidine degradation pathway. The sequence is that of Imidazolonepropionase from Methylobacterium sp. (strain 4-46).